Here is a 345-residue protein sequence, read N- to C-terminus: RDS/peripherin-like protein xRDS36 (345 aa).

Topologically, residues 1 to 24 (MVLFKAKFSFQRRVKLAQTLWLLS) are cytoplasmic. Residues 25 to 43 (WLSVLVGCLTFGMGIFLKV) form a helical membrane-spanning segment. Over 44–61 (QLWIHNEVMDNTTAHAVP) the chain is Lumenal. Residue asparagine 54 is glycosylated (N-linked (GlcNAc...) asparagine). Residues 62 to 80 (NTVITAGLVGILLGYFAGK) traverse the membrane as a helical segment. The Cytoplasmic segment spans residues 81 to 99 (ISQASMDLTKYQRWKSFMM). Residues 100 to 123 (PFFFLAILSCIVCLAALVLSVALR) traverse the membrane as a helical segment. The Lumenal portion of the chain corresponds to 124 to 264 (GTLEESLKIG…LGYYTGIMAT (141 aa)). N-linked (GlcNAc...) asparagine glycosylation occurs at asparagine 229. Residues 265-290 (NGAAVTLSFLLQASVLVSLRYVQTSM) traverse the membrane as a helical segment. Residues 291–345 (DKIRDPDDVEADTEGFLLEKGVMETVNSSLEKIKDLFKSNQVETAEGGGEGAAGS) lie on the Cytoplasmic side of the membrane.

It belongs to the PRPH2/ROM1 family. In terms of assembly, homodimer; disulfide-linked. Rod specific.

The protein localises to the membrane. This is RDS/peripherin-like protein xRDS36 (rds36) from Xenopus laevis (African clawed frog).